The chain runs to 290 residues: Purine nucleoside phosphorylase (290 aa).

68-69 is a binding site for phosphate; the sequence is RN. A substrate-binding site is contributed by M204. T205 is a phosphate binding site.

Belongs to the PNP/MTAP phosphorylase family. MTAP subfamily. Homotrimer.

It is found in the cytoplasm. Its subcellular location is the nucleus. It carries out the reaction a purine D-ribonucleoside + phosphate = a purine nucleobase + alpha-D-ribose 1-phosphate. It participates in purine metabolism; purine nucleoside salvage. Its function is as follows. Purine nucleoside phosphorylase involved in purine salvage. The sequence is that of Purine nucleoside phosphorylase from Drosophila melanogaster (Fruit fly).